We begin with the raw amino-acid sequence, 256 residues long: Cell division protein ZapD (256 aa).

The protein belongs to the ZapD family. As to quaternary structure, interacts with FtsZ.

The protein resides in the cytoplasm. Cell division factor that enhances FtsZ-ring assembly. Directly interacts with FtsZ and promotes bundling of FtsZ protofilaments, with a reduction in FtsZ GTPase activity. The sequence is that of Cell division protein ZapD from Aromatoleum aromaticum (strain DSM 19018 / LMG 30748 / EbN1) (Azoarcus sp. (strain EbN1)).